The following is a 587-amino-acid chain: MAKKKSTGPQPSLSSSPNGRAKVTAETITTTTTTTTDTTNSYSLLNIWVISLALKILLFIGYHSTDFDVHRNWLAITNKLPISQWYIENTSQWTLDYPPFFAYFEYLLSLLVPRFVANDGCLDIVEIGQYGLPTIYFQRLTVIISELVLFYALQTIVKTSPTLSAKRRMYVATASLALSPGLILIDHIHFQYNGMMYGILLLCINSARLQQYLSCGFWFSVLLCFKHIYLYLAPAVFIFLLRGYCLKFYWNKRKNFFINIFNFIQWINLFKLGSIVILVFIIAFGPFYNVLPQLISRLFPFSRGLTHAYWAPNIWAVYSFLDRILIQIYKKIPMSKYPLLKIFQFDPNSLNNDQLLKTSTRGIVGDIEFFILPNITPKLTFLLTLFYQIMALIPLFIQPTYRRFVGALTLCGYASFLFGWHVHEKAILLVIFPMTLLVARDQKLLTPFNLLVSCGYGSLFPLIFTCNEWLIKVVYTYTWYIIFYFNFRKVVRPSKNNIIGNGIGNGNGKGGGIILDRMVNLYILLFNVVVIITSLFDLFKHKYPVLQNFEFLNLMIYSVYCAIGIISSWNGFCWLYFIDDGIWNQDQ.

Positions M1–T30 are disordered. The Lumenal portion of the chain corresponds to M1–S41. Over residues T7–N18 the composition is skewed to polar residues. A helical membrane pass occupies residues Y42–Y62. Topologically, residues H63–R139 are cytoplasmic. A helical transmembrane segment spans residues L140–S160. Residues P161–M169 are Lumenal-facing. Residues Y170 to Y192 traverse the membrane as a helical segment. Residues N193 to S220 are Cytoplasmic-facing. A helical membrane pass occupies residues V221–L241. The Lumenal portion of the chain corresponds to R242–S274. Residues I275–I295 traverse the membrane as a helical segment. Residues S296–L298 lie on the Cytoplasmic side of the membrane. A helical transmembrane segment spans residues F299–L321. At D322–K378 the chain is on the lumenal side. A helical membrane pass occupies residues L379–P399. The Cytoplasmic segment spans residues T400–S415. Residues F416–L436 traverse the membrane as a helical segment. The Lumenal portion of the chain corresponds to L437–K443. A helical transmembrane segment spans residues L444 to F464. The Cytoplasmic segment spans residues T465 to C466. Residues N467 to F487 form a helical membrane-spanning segment. The Lumenal segment spans residues R488–M518. A helical membrane pass occupies residues V519–F539. The Cytoplasmic segment spans residues K540 to Y557. Residues S558–I578 form a helical membrane-spanning segment. Over D579 to Q587 the chain is Lumenal.

The protein belongs to the ALG6/ALG8 glucosyltransferase family.

The protein localises to the endoplasmic reticulum membrane. The enzyme catalyses an alpha-D-Glc-(1-&gt;3)-alpha-D-Man-(1-&gt;2)-alpha-D-Man-(1-&gt;2)-alpha-D-Man-(1-&gt;3)-[alpha-D-Man-(1-&gt;2)-alpha-D-Man-(1-&gt;3)-[alpha-D-Man-(1-&gt;2)-alpha-D-Man-(1-&gt;6)]-alpha-D-Man-(1-&gt;6)]-beta-D-Man-(1-&gt;4)-beta-D-GlcNAc-(1-&gt;4)-alpha-D-GlcNAc-diphospho-di-trans,poly-cis-dolichol + a di-trans,poly-cis-dolichyl beta-D-glucosyl phosphate = an alpha-D-Glc-(1-&gt;3)-alpha-D-Glc-(1-&gt;3)-alpha-D-Man-(1-&gt;2)-alpha-D-Man-(1-&gt;2)-alpha-D-Man-(1-&gt;3)-[alpha-D-Man-(1-&gt;2)-alpha-D-Man-(1-&gt;3)-[alpha-D-Man-(1-&gt;2)-alpha-D-Man-(1-&gt;6)]-alpha-D-Man-(1-&gt;6)]-beta-D-Man-(1-&gt;4)-beta-D-GlcNAc-(1-&gt;4)-alpha-D-GlcNAc-diphospho-di-trans,poly-cis-dolichol + a di-trans,poly-cis-dolichyl phosphate + H(+). It participates in protein modification; protein glycosylation. Functionally, dolichyl pyrophosphate Glc1Man9GlcNAc2 alpha-1,3-glucosyltransferase that operates in the biosynthetic pathway of dolichol-linked oligosaccharides, the glycan precursors employed in protein asparagine (N)-glycosylation. The assembly of dolichol-linked oligosaccharides begins on the cytosolic side of the endoplasmic reticulum membrane and finishes in its lumen. The sequential addition of sugars to dolichol pyrophosphate produces dolichol-linked oligosaccharides containing fourteen sugars, including two GlcNAcs, nine mannoses and three glucoses. Once assembled, the oligosaccharide is transferred from the lipid to nascent proteins by oligosaccharyltransferases. In the lumen of the endoplasmic reticulum, adds the second glucose residue from dolichyl phosphate glucose (Dol-P-Glc) onto the lipid-linked oligosaccharide intermediate Glc(1)Man(9)GlcNAc(2)-PP-Dol to produce Glc(2)Man(9)GlcNAc(2)-PP-Dol. In Candida albicans (strain SC5314 / ATCC MYA-2876) (Yeast), this protein is Dolichyl pyrophosphate Glc1Man9GlcNAc2 alpha-1,3-glucosyltransferase (ALG8).